A 317-amino-acid polypeptide reads, in one-letter code: 4-diphosphocytidyl-2-C-methyl-D-erythritol kinase (317 aa).

K11 is an active-site residue. 99–109 (PVAAGLAGGST) serves as a coordination point for ATP. D141 is a catalytic residue.

Belongs to the GHMP kinase family. IspE subfamily.

It carries out the reaction 4-CDP-2-C-methyl-D-erythritol + ATP = 4-CDP-2-C-methyl-D-erythritol 2-phosphate + ADP + H(+). It participates in isoprenoid biosynthesis; isopentenyl diphosphate biosynthesis via DXP pathway; isopentenyl diphosphate from 1-deoxy-D-xylulose 5-phosphate: step 3/6. Its function is as follows. Catalyzes the phosphorylation of the position 2 hydroxy group of 4-diphosphocytidyl-2C-methyl-D-erythritol. This chain is 4-diphosphocytidyl-2-C-methyl-D-erythritol kinase, found in Trichormus variabilis (strain ATCC 29413 / PCC 7937) (Anabaena variabilis).